The following is a 233-amino-acid chain: Methyltransferase srdJ (233 aa).

Positions 1–32 are disordered; the sequence is MFQVQTAGTRTGTSSPDTTTSEAGLGSTPPMP. The segment covering 9–21 has biased composition (low complexity); sequence TRTGTSSPDTTTS. 3 residues coordinate S-adenosyl-L-methionine: Trp40, Trp52, and Gly81. The Required for methyltransferase activity signature appears at 140-146; the sequence is EISSQKY.

Belongs to the methyltransferase superfamily.

Functionally, methyltransferase; part of the gene cluster that mediates the biosynthesis of sordarial, a salicylic aldehyde structurally related to the phytotoxin pyriculol. The most interesting aspect of this pathway is formation of an aromatic product from the highly reducing polyketide synthase srdA. SrdA synthesizes a reduced polyketide chain from one molecule of acetyl-CoA and five molecules of malonyl-CoA. The polyketide chain is then reductively released as an aldehyde. The oxidoreductases srdC, srdD and srdE then oxidize one of the hydroxy groups to facilitate the intramolecular aldol condensation, followed by dehydration to yield a salicylic aldehyde. This aldehyde can undergo facile reduction by endogenous reductases to yield the alcohol 1-hydroxy-2-hydroxymethyl-3-pent-1,3-dienylbenzene. The flavin-dependent srdI counteract against the propensity of the aldehydes to be reduced under physiological conditions and is responsible for reoxidizing 1-hydroxy-2-hydroxymethyl-3-pent-1,3-dienylbenzene back to the salicylic aldehyde. This salicylic aldehyde is then selectively epoxidized by the cupin-domain-containing oxidoreductase srdB to yield the epoxide, which can be hydrolyzed stereoselectively by the hydrolase srdG to give the final product sordarial. The chain is Methyltransferase srdJ from Neurospora crassa (strain ATCC 24698 / 74-OR23-1A / CBS 708.71 / DSM 1257 / FGSC 987).